Here is a 441-residue protein sequence, read N- to C-terminus: Glutamate-1-semialdehyde 2,1-aminomutase (441 aa).

Residue Lys270 is modified to N6-(pyridoxal phosphate)lysine.

Belongs to the class-III pyridoxal-phosphate-dependent aminotransferase family. HemL subfamily. In terms of assembly, homodimer. Pyridoxal 5'-phosphate is required as a cofactor.

It localises to the cytoplasm. It carries out the reaction (S)-4-amino-5-oxopentanoate = 5-aminolevulinate. The protein operates within porphyrin-containing compound metabolism; protoporphyrin-IX biosynthesis; 5-aminolevulinate from L-glutamyl-tRNA(Glu): step 2/2. The chain is Glutamate-1-semialdehyde 2,1-aminomutase (hemL) from Propionibacterium freudenreichii subsp. freudenreichii.